The sequence spans 402 residues: Shaggy-related protein kinase GSK2 (402 aa).

A disordered region spans residues 1-38 (MDQPAPAPEPMLLDAQPPAAVACDKKQQEGEAPYAEGN). The Protein kinase domain maps to 63 to 347 (YMAERVVGTG…ALDACAHPFF (285 aa)). Residues 69-77 (VGTGSFGIV) and K92 each bind ATP. D188 serves as the catalytic Proton acceptor.

This sequence belongs to the protein kinase superfamily. CMGC Ser/Thr protein kinase family. GSK-3 subfamily. Interacts with DLT. Interacts with OFP8. Interacts with GRF4. Interacts with PUB24. Interacts with SMOS1. Post-translationally, autophosphorylated. In terms of tissue distribution, expressed in lamina joints, vascular tissue and nodes.

Its subcellular location is the cytoplasm. The protein resides in the nucleus. The catalysed reaction is L-seryl-[protein] + ATP = O-phospho-L-seryl-[protein] + ADP + H(+). It catalyses the reaction L-threonyl-[protein] + ATP = O-phospho-L-threonyl-[protein] + ADP + H(+). Its function is as follows. Serine-threonine kinase that acts as a negative regulator of brassinosteroid (BR) signaling. Phosphorylates DLT and BZR1, two positive regulators that mediates several BR responses. Phosphorylation of DLT and BZR1 inhibits their activities in BR signaling. Phosphorylates OFP8, a positive regulator of BR responses. Phosphorylated OFP8 shuttles from the nucleus to the cytoplasm where it is degraded by the proteasome. Phosphorylates the E3 ubiquitin-protein ligase PUB24, a negative regulator of BR signaling, which targets BZR1 and promotes its degradation via the 26S proteasome. Phosphorylation of PUB24 increases its stability. Phosphorylates the AP2-ERF transcription factor SMOS1, a positive regulator of BR signaling, which cooperatively functions in a transactivating complex with BZR1 to enhance the transcription of BR biosynthetic genes. Phosphorylation of SMOS1 leads to its degradation by an unknown mechanism. In Oryza sativa subsp. japonica (Rice), this protein is Shaggy-related protein kinase GSK2.